Here is a 253-residue protein sequence, read N- to C-terminus: 5'/3'-nucleotidase SurE (253 aa).

D8, D9, S39, and N92 together coordinate a divalent metal cation.

This sequence belongs to the SurE nucleotidase family. It depends on a divalent metal cation as a cofactor.

It is found in the cytoplasm. It catalyses the reaction a ribonucleoside 5'-phosphate + H2O = a ribonucleoside + phosphate. It carries out the reaction a ribonucleoside 3'-phosphate + H2O = a ribonucleoside + phosphate. The enzyme catalyses [phosphate](n) + H2O = [phosphate](n-1) + phosphate + H(+). Nucleotidase with a broad substrate specificity as it can dephosphorylate various ribo- and deoxyribonucleoside 5'-monophosphates and ribonucleoside 3'-monophosphates with highest affinity to 3'-AMP. Also hydrolyzes polyphosphate (exopolyphosphatase activity) with the preference for short-chain-length substrates (P20-25). Might be involved in the regulation of dNTP and NTP pools, and in the turnover of 3'-mononucleotides produced by numerous intracellular RNases (T1, T2, and F) during the degradation of various RNAs. The sequence is that of 5'/3'-nucleotidase SurE from Sodalis glossinidius (strain morsitans).